Here is a 190-residue protein sequence, read N- to C-terminus: DNA-binding transcriptional repressor TetR (190 aa).

One can recognise an HTH tetR-type domain in the interval Glu-6 to Phe-66. Positions Ser-29–Trp-48 form a DNA-binding region, H-T-H motif.

As to quaternary structure, homodimer.

Binds to its own palindromic promoter and represses transcription of its operon; addition of tetracycline or doxycycline (but not tigecycline) interferes with DNA binding. Addition of TetX to the DNA-TetR-antibiotic complex restores DNA binding. This Mycobacteroides abscessus (strain ATCC 19977 / DSM 44196 / CCUG 20993 / CIP 104536 / JCM 13569 / NCTC 13031 / TMC 1543 / L948) (Mycobacterium abscessus) protein is DNA-binding transcriptional repressor TetR.